We begin with the raw amino-acid sequence, 425 residues long: Histone-binding protein RBBP4-A (425 aa).

The residue at position 2 (A2) is an N-acetylalanine. 7 WD repeats span residues Y32–G125, E126–G175, H176–F223, G225–D270, A271–E314, S315–G371, and G372–M404.

The protein belongs to the WD repeat RBAP46/RBAP48/MSI1 family. In terms of assembly, binds directly to histone H4, probably via helix 1 of the histone fold, a region that is not accessible when histone H4 is in chromatin. Probably forms a large corepressor complex that contains ncor1, sin3a, hdac1-A and/or hdac1-B, hdac2, rbbp4-A and/or rbbp4-B and possibly rbbp7.

The protein resides in the nucleus. Its subcellular location is the chromosome. It is found in the telomere. Functionally, core histone-binding subunit that may target chromatin assembly factors, chromatin remodeling factors and histone deacetylases to their histone substrates in a manner that is regulated by nucleosomal DNA. Component of several complexes which regulate chromatin metabolism. In Xenopus laevis (African clawed frog), this protein is Histone-binding protein RBBP4-A (rbbp4-a).